Reading from the N-terminus, the 931-residue chain is Protein translocase subunit SecA (931 aa).

ATP is bound by residues glutamine 87, 105 to 109 (GEGKT), and aspartate 523. Zn(2+) contacts are provided by cysteine 915, cysteine 917, cysteine 926, and histidine 927.

Belongs to the SecA family. Monomer and homodimer. Part of the essential Sec protein translocation apparatus which comprises SecA, SecYEG and auxiliary proteins SecDF-YajC and YidC. Zn(2+) is required as a cofactor.

It localises to the cell inner membrane. It is found in the cytoplasm. The catalysed reaction is ATP + H2O + cellular proteinSide 1 = ADP + phosphate + cellular proteinSide 2.. In terms of biological role, part of the Sec protein translocase complex. Interacts with the SecYEG preprotein conducting channel. Has a central role in coupling the hydrolysis of ATP to the transfer of proteins into and across the cell membrane, serving both as a receptor for the preprotein-SecB complex and as an ATP-driven molecular motor driving the stepwise translocation of polypeptide chains across the membrane. The chain is Protein translocase subunit SecA from Xanthobacter autotrophicus (strain ATCC BAA-1158 / Py2).